Reading from the N-terminus, the 306-residue chain is Putative dihydroorotate dehydrogenase A (fumarate) (306 aa).

FMN is bound by residues Ser-20 and 44–45; that span reads KG. Substrate contacts are provided by residues Lys-44 and 68–72; that span reads NSIGL. FMN is bound by residues Asn-98 and Asn-126. Asn-126 serves as a coordination point for substrate. Cys-129 (nucleophile) is an active-site residue. Residues Lys-164 and Ile-190 each coordinate FMN. 191 to 192 contributes to the substrate binding site; that stretch reads NT. Residues Gly-216, 244 to 245, and 266 to 267 contribute to the FMN site; these read GG and GT.

It belongs to the dihydroorotate dehydrogenase family. Type 1 subfamily. Homodimer. It depends on FMN as a cofactor.

It localises to the cytoplasm. The enzyme catalyses (S)-dihydroorotate + fumarate = orotate + succinate. The protein operates within pyrimidine metabolism; UMP biosynthesis via de novo pathway. Functionally, catalyzes the conversion of dihydroorotate to orotate with fumarate as the electron acceptor. The chain is Putative dihydroorotate dehydrogenase A (fumarate) (pyrD) from Aquifex aeolicus (strain VF5).